The chain runs to 926 residues: Alpha-aminoadipic semialdehyde synthase, mitochondrial (926 aa).

The N-terminal 27 residues, 1 to 27 (MLRAQRLRLARLRACVSRGLHHKPVMA), are a transit peptide targeting the mitochondrion. The tract at residues 28–455 (LRREDVNAWE…DAVITSNGLL (428 aa)) is lysine-ketoglutarate reductase. Residues Lys-48, Lys-52, and Lys-56 each carry the N6-acetyllysine modification. Position 93 is an N6-acetyllysine; alternate (Lys-93). At Lys-93 the chain carries N6-succinyllysine; alternate. Lys-128 is subject to N6-acetyllysine. Lys-138 carries the post-translational modification N6-acetyllysine; alternate. Lys-138 is subject to N6-succinyllysine; alternate. Lys-274 carries the post-translational modification N6-succinyllysine. The residue at position 286 (Lys-286) is an N6-acetyllysine; alternate. Residue Lys-286 is modified to N6-succinyllysine; alternate. At Lys-333 the chain carries N6-succinyllysine. Position 458 is an N6-acetyllysine; alternate (Lys-458). Lys-458 bears the N6-succinyllysine; alternate mark. The interval 477-926 (MSTKKKVLVL…VFNTQSTIKL (450 aa)) is saccharopine dehydrogenase. 3 residues coordinate NAD(+): Ser-488, Asp-512, and Gln-516. An N6-acetyllysine; alternate mark is found at Lys-523 and Lys-535. Residues Lys-523 and Lys-535 each carry the N6-succinyllysine; alternate modification. 3 residues coordinate NAD(+): Leu-554, Ala-576, and Ser-577. 577–578 (SY) is an L-saccharopine binding site. Residue Lys-584 is modified to N6-acetyllysine; alternate. Lys-584 bears the N6-succinyllysine; alternate mark. Residues Leu-603, Asp-604, and Pro-605 each coordinate NAD(+). Asp-604 provides a ligand contact to L-saccharopine. Position 703 (Arg-703) interacts with L-saccharopine. An N6-acetyllysine modification is found at Lys-707. 724-726 (TLR) contacts L-saccharopine. Lys-732 bears the N6-succinyllysine mark. Position 739 is an N6-acetyllysine (Lys-739). Lys-761 is subject to N6-acetyllysine; alternate. An N6-succinyllysine; alternate modification is found at Lys-761. Lys-778 and Lys-780 each carry N6-acetyllysine.

The protein in the N-terminal section; belongs to the AlaDH/PNT family. In the C-terminal section; belongs to the saccharopine dehydrogenase family. Homotetramer.

The protein resides in the mitochondrion. The enzyme catalyses L-saccharopine + NADP(+) + H2O = L-lysine + 2-oxoglutarate + NADPH + H(+). The catalysed reaction is L-saccharopine + NAD(+) + H2O = (S)-2-amino-6-oxohexanoate + L-glutamate + NADH + H(+). The protein operates within amino-acid degradation; L-lysine degradation via saccharopine pathway; glutaryl-CoA from L-lysine: step 1/6. It participates in amino-acid degradation; L-lysine degradation via saccharopine pathway; glutaryl-CoA from L-lysine: step 2/6. Functionally, bifunctional enzyme that catalyzes the first two steps in lysine degradation. This chain is Alpha-aminoadipic semialdehyde synthase, mitochondrial, found in Rattus norvegicus (Rat).